Consider the following 1176-residue polypeptide: 3-hydroxy-3-methylglutaryl-coenzyme A reductase (1176 aa).

At 1 to 34 (MSLPNHSGSSAFKSFSYIVGTGIKRAAKLSTRNP) the chain is on the cytoplasmic side. A helical transmembrane segment spans residues 35-55 (IEMIVVVLILSSFSYFYLFNL). Topologically, residues 56-299 (ARTSDIFSGT…VKELIDLADN (244 aa)) are lumenal. N-linked (GlcNAc...) asparagine glycans are attached at residues Asn-224 and Asn-238. Residues 300 to 320 (IDIIVILVGYIMMIATFISLY) traverse the membrane as a helical segment. The 165-residue stretch at 301-465 (DIIVILVGYI…FTWYTAVLAL (165 aa)) folds into the SSD domain. Residues 321–330 (VNMRAMGSRY) lie on the Cytoplasmic side of the membrane. Residues 331-351 (TLATAVVFNGFFSFMLALLTV) form a helical membrane-spanning segment. Residues 352-355 (RALG) lie on the Lumenal side of the membrane. The helical transmembrane segment at 356-376 (VDVYPVVLAEAIPFLAVTIGF) threads the bilayer. The Cytoplasmic segment spans residues 377 to 422 (ERPFKLTKRVFQFSKETPLTKQEIRTTIMRAVDTVALPIARDCFME). A helical transmembrane segment spans residues 423 to 443 (IIVLVLGAKSGISGLEEFCLL). Ser-444 is a topological domain (lumenal). The helical transmembrane segment at 445–465 (AILLAYDFIIMFTWYTAVLAL) threads the bilayer. Over 466–524 (KLELLRIREINGISADDIKKGTKKSTGYIRRTVIKAFSDDHAAGANTANQKADGPIIGR) the chain is Cytoplasmic. The helical transmembrane segment at 525–545 (VKLLMIVGFVVMHIFKFCSAF) threads the bilayer. The Lumenal portion of the chain corresponds to 546–622 (QSVGPQVNIT…DTYAVYIQHP (77 aa)). N-linked (GlcNAc...) asparagine glycans are attached at residues Asn-553 and Asn-596. A helical transmembrane segment spans residues 623 to 643 (VISKWLTIALFVSLFLNTYLF). At 644 to 1176 (NVAKQPKQIV…GTEPGTCIKS (533 aa)) the chain is on the cytoplasmic side. A disordered region spans residues 699 to 724 (PNHKRSHNHHHSHSHSHNHHSNHHQS). Over residues 700-721 (NHKRSHNHHHSHSHSHNHHSNH) the composition is skewed to basic residues. The Charge relay system role is filled by Glu-841. Position 847-853 (847-853 (STARGCK)) interacts with CoA. NADP(+) contacts are provided by residues 907–909 (SRF) and 934–942 (DAMGMNMIS). Residue Lys-972 is the Charge relay system of the active site. Residue 1001–1003 (VLK) participates in CoA binding. Residue Asp-1048 is the Charge relay system of the active site. CoA is bound at residue 1145-1146 (AH). His-1146 (proton donor) is an active-site residue. 1150 to 1151 (NR) lines the NADP(+) pocket. The interval 1153–1176 (TQAPTITSGPAPSTGTEPGTCIKS) is disordered.

It belongs to the HMG-CoA reductase family.

The protein localises to the endoplasmic reticulum membrane. It carries out the reaction (R)-mevalonate + 2 NADP(+) + CoA = (3S)-3-hydroxy-3-methylglutaryl-CoA + 2 NADPH + 2 H(+). The protein operates within metabolic intermediate biosynthesis; (R)-mevalonate biosynthesis; (R)-mevalonate from acetyl-CoA: step 3/3. HMG-CoA reductase; part of the first module of ergosterol biosynthesis pathway that includes the early steps of the pathway, conserved across all eukaryotes, and which results in the formation of mevalonate from acetyl-coenzyme A (acetyl-CoA). In this module, the cytosolic acetyl-CoA acetyltransferase catalyzes the formation of acetoacetyl-CoA. The hydroxymethylglutaryl-CoA synthase then condenses acetyl-CoA with acetoacetyl-CoA to form HMG-CoA. The rate-limiting step of the early module is the reduction to mevalonate by the 3-hydroxy-3-methylglutaryl-coenzyme A (HMG-CoA) reductase hmgA. The sequence is that of 3-hydroxy-3-methylglutaryl-coenzyme A reductase from Phycomyces blakesleeanus (strain ATCC 8743b / DSM 1359 / FGSC 10004 / NBRC 33097 / NRRL 1555).